The sequence spans 533 residues: D-3-phosphoglycerate dehydrogenase (533 aa).

Residue A2 is modified to N-acetylalanine. S14 is subject to Phosphoserine. K21 carries the N6-acetyllysine; alternate modification. K21 is covalently cross-linked (Glycyl lysine isopeptide (Lys-Gly) (interchain with G-Cter in SUMO1); alternate). Residue K21 forms a Glycyl lysine isopeptide (Lys-Gly) (interchain with G-Cter in SUMO2); alternate linkage. K58 carries the N6-acetyllysine modification. Residues T78, 155–156, D175, T207, 234–236, and D260 each bind NAD(+); these read RI and CAR. T78 carries the phosphothreonine modification. Residue R236 is part of the active site. E265 is an active-site residue. H283 serves as the catalytic Proton donor. 283 to 286 is a binding site for NAD(+); it reads HLGA.

The protein belongs to the D-isomer specific 2-hydroxyacid dehydrogenase family. As to quaternary structure, homotetramer.

The enzyme catalyses (2R)-3-phosphoglycerate + NAD(+) = 3-phosphooxypyruvate + NADH + H(+). It carries out the reaction (R)-2-hydroxyglutarate + NAD(+) = 2-oxoglutarate + NADH + H(+). It catalyses the reaction (S)-malate + NAD(+) = oxaloacetate + NADH + H(+). Its pathway is amino-acid biosynthesis; L-serine biosynthesis; L-serine from 3-phospho-D-glycerate: step 1/3. Its function is as follows. Catalyzes the reversible oxidation of 3-phospho-D-glycerate to 3-phosphonooxypyruvate, the first step of the phosphorylated L-serine biosynthesis pathway. Also catalyzes the reversible oxidation of 2-hydroxyglutarate to 2-oxoglutarate and the reversible oxidation of (S)-malate to oxaloacetate. The protein is D-3-phosphoglycerate dehydrogenase (PHGDH) of Pongo abelii (Sumatran orangutan).